The primary structure comprises 314 residues: 2,3-dihydroxyphenylpropionate/2,3-dihydroxicinnamic acid 1,2-dioxygenase (314 aa).

The active-site Proton donor is the histidine 115. The active-site Proton acceptor is histidine 179.

The protein belongs to the LigB/MhpB extradiol dioxygenase family. In terms of assembly, homotetramer. The cofactor is Fe(2+).

The enzyme catalyses 3-(2,3-dihydroxyphenyl)propanoate + O2 = (2Z,4E)-2-hydroxy-6-oxonona-2,4-dienedioate + H(+). The catalysed reaction is (2E)-3-(2,3-dihydroxyphenyl)prop-2-enoate + O2 = (2Z,4E,7E)-2-hydroxy-6-oxonona-2,4,7-trienedioate + H(+). The protein operates within aromatic compound metabolism; 3-phenylpropanoate degradation. Catalyzes the non-heme iron(II)-dependent oxidative cleavage of 2,3-dihydroxyphenylpropionic acid and 2,3-dihydroxicinnamic acid into 2-hydroxy-6-ketononadienedioate and 2-hydroxy-6-ketononatrienedioate, respectively. This is 2,3-dihydroxyphenylpropionate/2,3-dihydroxicinnamic acid 1,2-dioxygenase from Rhodococcus globerulus.